The sequence spans 147 residues: Large ribosomal subunit protein uL15 (147 aa).

Positions 21-49 (RVGRGEGSKGKTAGRGTKGTKARAPVRPG) are disordered.

It belongs to the universal ribosomal protein uL15 family. As to quaternary structure, part of the 50S ribosomal subunit.

In terms of biological role, binds to the 23S rRNA. The protein is Large ribosomal subunit protein uL15 of Tropheryma whipplei (strain TW08/27) (Whipple's bacillus).